Here is a 319-residue protein sequence, read N- to C-terminus: Transcription factor jun-1 (319 aa).

2 disordered regions span residues 1–52 and 216–264; these read MEED…EKES and NGVN…CRQK. A compositionally biased stretch (low complexity) spans 8-19; it reads PPSSSTSSESPE. Positions 28-38 are enriched in basic residues; the sequence is PTRRRKNSKKD. A basic motif region spans residues 244 to 285; sequence KKKLERKRARNRQAATKCRQKKMDRIKELEEQVLHEKHRGQR. In terms of domain architecture, bZIP spans 244-307; the sequence is KKKLERKRAR…EHFRRTVEHH (64 aa). Residues 286-293 are leucine-zipper; the sequence is LDAELLEL.

The protein belongs to the bZIP family. Jun subfamily. In terms of assembly, heterodimer; with fos-1. Isoform a, isoform b, isoform c and isoform d are expressed in the spermatheca.

It localises to the nucleus. In terms of biological role, transcription factor that recognizes and binds to the AP-1 non-canonical enhancer heptamer motif 5'-TTAGTCA-3'. Required for ovulation. Controls plc-1 expression in the spermatheca to regulate spermathecal valve dilation. The protein is Transcription factor jun-1 of Caenorhabditis elegans.